A 334-amino-acid polypeptide reads, in one-letter code: Aspartate carbamoyltransferase catalytic subunit (334 aa).

Carbamoyl phosphate contacts are provided by Arg-70 and Thr-71. Residue Lys-98 coordinates L-aspartate. Carbamoyl phosphate-binding residues include Arg-120, His-150, and Gln-153. 2 residues coordinate L-aspartate: Arg-183 and Arg-239. Carbamoyl phosphate-binding residues include Gly-280 and Pro-281.

It belongs to the aspartate/ornithine carbamoyltransferase superfamily. ATCase family. Heterododecamer (2C3:3R2) of six catalytic PyrB chains organized as two trimers (C3), and six regulatory PyrI chains organized as three dimers (R2).

It carries out the reaction carbamoyl phosphate + L-aspartate = N-carbamoyl-L-aspartate + phosphate + H(+). The protein operates within pyrimidine metabolism; UMP biosynthesis via de novo pathway; (S)-dihydroorotate from bicarbonate: step 2/3. Its function is as follows. Catalyzes the condensation of carbamoyl phosphate and aspartate to form carbamoyl aspartate and inorganic phosphate, the committed step in the de novo pyrimidine nucleotide biosynthesis pathway. The sequence is that of Aspartate carbamoyltransferase catalytic subunit from Pseudomonas aeruginosa (strain LESB58).